The sequence spans 571 residues: Sulfite reductase [NADPH] hemoprotein beta-component (571 aa).

Residues Cys-435, Cys-441, Cys-480, and Cys-484 each coordinate [4Fe-4S] cluster. Residue Cys-484 coordinates siroheme.

Belongs to the nitrite and sulfite reductase 4Fe-4S domain family. As to quaternary structure, alpha(8)-beta(8). The alpha component is a flavoprotein, the beta component is a hemoprotein. Siroheme serves as cofactor. Requires [4Fe-4S] cluster as cofactor.

The catalysed reaction is hydrogen sulfide + 3 NADP(+) + 3 H2O = sulfite + 3 NADPH + 4 H(+). The protein operates within sulfur metabolism; hydrogen sulfide biosynthesis; hydrogen sulfide from sulfite (NADPH route): step 1/1. Functionally, component of the sulfite reductase complex that catalyzes the 6-electron reduction of sulfite to sulfide. This is one of several activities required for the biosynthesis of L-cysteine from sulfate. The chain is Sulfite reductase [NADPH] hemoprotein beta-component from Dickeya chrysanthemi (strain Ech1591) (Dickeya zeae (strain Ech1591)).